The chain runs to 341 residues: MILLENVKKIYKAKSGDVTAVDNANLKIEKGEIFGVIGYSGAGKSSLIRLFNQLEKPTSGQITIANRVISAITGSELRKARQEIGMIFQHFNLLWSRTVRENIEFPLEIAGVDKAKRRKRVDELIHLVGLEGRGDAYPSQLSGGQKQRVGIARALANNPQVLLCDEATSALDPETTDQILDLLLDINKRLGLTIVLITHEMHVIRKICNRVAVMEKGKIVETGPVLDVFRNPQQDITKRFVQQLTDSEDTNETIESLIEKYPDGKVVRLQFIGEAVERPVLQRLMQRSDIEVSILQGNIAQTNNGSYGSLVVHLNGEETAIQQAIEGIHQDQVELEVIAHG.

Residues 2–241 enclose the ABC transporter domain; that stretch reads ILLENVKKIY…PQQDITKRFV (240 aa). 38–45 contributes to the ATP binding site; the sequence is GYSGAGKS.

This sequence belongs to the ABC transporter superfamily. Methionine importer (TC 3.A.1.24) family. The complex is composed of two ATP-binding proteins (MetN), two transmembrane proteins (MetI) and a solute-binding protein (MetQ).

It localises to the cell membrane. The enzyme catalyses L-methionine(out) + ATP + H2O = L-methionine(in) + ADP + phosphate + H(+). It carries out the reaction D-methionine(out) + ATP + H2O = D-methionine(in) + ADP + phosphate + H(+). In terms of biological role, part of the ABC transporter complex MetNIQ involved in methionine import. Responsible for energy coupling to the transport system. This Bacillus cereus (strain ATCC 10987 / NRS 248) protein is Methionine import ATP-binding protein MetN 3.